The primary structure comprises 329 residues: Cytosolic arginine sensor for mTORC1 subunit 2 (329 aa).

ACT domains are found at residues 72–139 (ADAT…MHTL) and 262–322 (ELWK…NALQ).

The protein belongs to the GATS family. In terms of assembly, may form homodimers and heterodimers.

The protein resides in the cytoplasm. The protein localises to the cytosol. Functionally, functions as a negative regulator of the TORC1 signaling pathway. The protein is Cytosolic arginine sensor for mTORC1 subunit 2 of Xenopus laevis (African clawed frog).